Here is a 520-residue protein sequence, read N- to C-terminus: GMP synthase [glutamine-hydrolyzing] (520 aa).

Positions 12–202 (KIIVLDFGSQ…AFDVCGCTGD (191 aa)) constitute a Glutamine amidotransferase type-1 domain. Cys89 functions as the Nucleophile in the catalytic mechanism. Residues His176 and Glu178 contribute to the active site. Positions 203 to 395 (WSMENFIDME…LGMPDAIVWR (193 aa)) constitute a GMPS ATP-PPase domain. 230–236 (SGGVDSS) lines the ATP pocket.

As to quaternary structure, homodimer.

It catalyses the reaction XMP + L-glutamine + ATP + H2O = GMP + L-glutamate + AMP + diphosphate + 2 H(+). Its pathway is purine metabolism; GMP biosynthesis; GMP from XMP (L-Gln route): step 1/1. In terms of biological role, catalyzes the synthesis of GMP from XMP. The chain is GMP synthase [glutamine-hydrolyzing] from Enterococcus faecalis (strain ATCC 700802 / V583).